Reading from the N-terminus, the 60-residue chain is uncharacterized protein (60 aa).

This is an uncharacterized protein from Dictyostelium discoideum (Social amoeba).